The sequence spans 328 residues: DNA-directed RNA polymerase subunit alpha (328 aa).

Positions 1–233 (MHNSATEFLK…EQLEAFIDLR (233 aa)) are alpha N-terminal domain (alpha-NTD). The tract at residues 247–328 (FDPVLLRPVD…WPPVSILKND (82 aa)) is alpha C-terminal domain (alpha-CTD).

It belongs to the RNA polymerase alpha chain family. In terms of assembly, homodimer. The RNAP catalytic core consists of 2 alpha, 1 beta, 1 beta' and 1 omega subunit. When a sigma factor is associated with the core the holoenzyme is formed, which can initiate transcription.

It carries out the reaction RNA(n) + a ribonucleoside 5'-triphosphate = RNA(n+1) + diphosphate. In terms of biological role, DNA-dependent RNA polymerase catalyzes the transcription of DNA into RNA using the four ribonucleoside triphosphates as substrates. The chain is DNA-directed RNA polymerase subunit alpha from Wigglesworthia glossinidia brevipalpis.